Reading from the N-terminus, the 439-residue chain is uncharacterized protein (439 aa).

CBS domains lie at 195 to 254 (LTPA…SIEK) and 256 to 314 (MTKN…KQPQ).

This is an uncharacterized protein from Bacillus subtilis (strain 168).